The sequence spans 113 residues: Non-specific lipid-transfer protein 6 (113 aa).

A signal peptide spans 1–19; it reads MRSLLLAVCLVLALHCGEA. 4 disulfides stabilise this stretch: cysteine 23/cysteine 70, cysteine 33/cysteine 47, cysteine 48/cysteine 95, and cysteine 68/cysteine 109.

This sequence belongs to the plant LTP family.

In terms of biological role, plant non-specific lipid-transfer proteins transfer phospholipids as well as galactolipids across membranes. May play a role in wax or cutin deposition in the cell walls of expanding epidermal cells and certain secretory tissues. The protein is Non-specific lipid-transfer protein 6 (LTP6) of Arabidopsis thaliana (Mouse-ear cress).